The sequence spans 240 residues: UDP-2,3-diacylglucosamine hydrolase (240 aa).

Residues D8, H10, D41, N79, and H114 each contribute to the Mn(2+) site. Position 79–80 (79–80 (NR)) interacts with substrate. 5 residues coordinate substrate: D122, S160, N164, K167, and H195. Residues H195 and H197 each contribute to the Mn(2+) site.

The protein belongs to the LpxH family. The cofactor is Mn(2+).

Its subcellular location is the cell inner membrane. It carries out the reaction UDP-2-N,3-O-bis[(3R)-3-hydroxytetradecanoyl]-alpha-D-glucosamine + H2O = 2-N,3-O-bis[(3R)-3-hydroxytetradecanoyl]-alpha-D-glucosaminyl 1-phosphate + UMP + 2 H(+). It participates in glycolipid biosynthesis; lipid IV(A) biosynthesis; lipid IV(A) from (3R)-3-hydroxytetradecanoyl-[acyl-carrier-protein] and UDP-N-acetyl-alpha-D-glucosamine: step 4/6. Its function is as follows. Hydrolyzes the pyrophosphate bond of UDP-2,3-diacylglucosamine to yield 2,3-diacylglucosamine 1-phosphate (lipid X) and UMP by catalyzing the attack of water at the alpha-P atom. Involved in the biosynthesis of lipid A, a phosphorylated glycolipid that anchors the lipopolysaccharide to the outer membrane of the cell. The polypeptide is UDP-2,3-diacylglucosamine hydrolase (Salmonella typhi).